A 633-amino-acid chain; its full sequence is MGLLNSSDKEIIKRALPKASNKIIDVTVARLYIAYPDKNEWQYTGLSGALALVDDLVGNTFFLKLVDINGHRGVIWDQELYVNFEYYQDRTFFHTFEMEECFAGLLFVDINEASHFLKRVQKRERYANRKTLLNKNAVALTKKVREEQKSQVVHGPRGESLIDNQRKRYNYEDVDTIPTTKHKAPPPPPPTAETFDSDQTSSFSDINSTTASAPTTPAPALPPASPEVRKEETHPKHSLPPLPNQFAPLPDPPQHNSPPQNNAPSQPQSNPFPFPIPEIPSTQSATNPFPFPVPQQQFNQAPSMGIPQQNRPLPQLPNRNNRPVPPPPPMRTTTEGSGVRLPAPPPPPRRGPAPPPPPHRHVTSNTLNSAGGNSLLPQATGRRGPAPPPPPRASRPTPNVTMQQNPQQYNNSNRPFGYQTNSNMSSPPPPPVTTFNTLTPQMTAATGQPAVPLPQNTQAPSQATNVPVAPPPPPASLGQSQIPQSAPSAPIPPTLPSTTSAAPPPPPAFLTQQPQSGGAPAPPPPPQMPATSTSGGGSFAETTGDAGRDALLASIRGAGGIGALRKVDKSQLDKPSVLLQEARGESASPPAAAGNGGTPGGPPASLADALAAALNKRKTKVGAHDDMDNGDDW.

The 112-residue stretch at 16 to 127 (LPKASNKIID…KRVQKRERYA (112 aa)) folds into the WH1 domain. Disordered stretches follow at residues 145–545 (REEQ…TTGD) and 563–606 (ALRK…PASL). The span at 192 to 215 (AETFDSDQTSSFSDINSTTASAPT) shows a compositional bias: low complexity. Pro residues-rich tracts occupy residues 216-225 (TPAPALPPAS) and 238-256 (SLPP…PQHN). Composition is skewed to low complexity over residues 257–269 (SPPQ…QPQS) and 307–322 (PQQN…RNNR). Position 334 is a phosphothreonine (threonine 334). The residue at position 337 (serine 337) is a Phosphoserine. Over residues 342–357 (PAPPPPPRRGPAPPPP) the composition is skewed to pro residues. Composition is skewed to polar residues over residues 363-376 (TSNT…NSLL), 399-414 (NVTM…NSNR), and 454-465 (PQNTQAPSQATN). The span at 479–488 (QSQIPQSAPS) shows a compositional bias: low complexity. Residues 547 to 567 (GRDALLASIRGAGGIGALRKV) enclose the WH2 domain. Serine 588 bears the Phosphoserine mark.

In terms of assembly, interacts with KRE6, LSB3, LSB5 and YSC84.

The polypeptide is Proline-rich protein LAS17 (LAS17) (Saccharomyces cerevisiae (strain ATCC 204508 / S288c) (Baker's yeast)).